The primary structure comprises 206 residues: Ribosomal RNA large subunit methyltransferase E (206 aa).

Residues Gly-60, Trp-62, Asp-80, Asp-96, and Asp-121 each coordinate S-adenosyl-L-methionine. Lys-161 acts as the Proton acceptor in catalysis.

This sequence belongs to the class I-like SAM-binding methyltransferase superfamily. RNA methyltransferase RlmE family.

The protein resides in the cytoplasm. It carries out the reaction uridine(2552) in 23S rRNA + S-adenosyl-L-methionine = 2'-O-methyluridine(2552) in 23S rRNA + S-adenosyl-L-homocysteine + H(+). Specifically methylates the uridine in position 2552 of 23S rRNA at the 2'-O position of the ribose in the fully assembled 50S ribosomal subunit. The protein is Ribosomal RNA large subunit methyltransferase E of Legionella pneumophila (strain Corby).